We begin with the raw amino-acid sequence, 697 residues long: tRNA 5-methylaminomethyl-2-thiouridine biosynthesis bifunctional protein MnmC (697 aa).

The segment at 1–272 is tRNA (mnm(5)s(2)U34)-methyltransferase; the sequence is MPKPASMAMN…KREMLTAVMS (272 aa). The tract at residues 300-697 is FAD-dependent cmnm(5)s(2)U34 oxidoreductase; the sequence is IGAGVAGLLT…HKHKTRQAVI (398 aa).

In the N-terminal section; belongs to the methyltransferase superfamily. tRNA (mnm(5)s(2)U34)-methyltransferase family. It in the C-terminal section; belongs to the DAO family. FAD is required as a cofactor.

The protein resides in the cytoplasm. It carries out the reaction 5-aminomethyl-2-thiouridine(34) in tRNA + S-adenosyl-L-methionine = 5-methylaminomethyl-2-thiouridine(34) in tRNA + S-adenosyl-L-homocysteine + H(+). Catalyzes the last two steps in the biosynthesis of 5-methylaminomethyl-2-thiouridine (mnm(5)s(2)U) at the wobble position (U34) in tRNA. Catalyzes the FAD-dependent demodification of cmnm(5)s(2)U34 to nm(5)s(2)U34, followed by the transfer of a methyl group from S-adenosyl-L-methionine to nm(5)s(2)U34, to form mnm(5)s(2)U34. The chain is tRNA 5-methylaminomethyl-2-thiouridine biosynthesis bifunctional protein MnmC from Psychrobacter cryohalolentis (strain ATCC BAA-1226 / DSM 17306 / VKM B-2378 / K5).